The primary structure comprises 225 residues: Ribosomal RNA small subunit methyltransferase G (225 aa).

S-adenosyl-L-methionine-binding positions include glycine 71, leucine 76, 121–122 (AE), and arginine 139. The segment at 204-225 (VVEARRATPSNGRGRPGRSSRR) is disordered.

The protein belongs to the methyltransferase superfamily. RNA methyltransferase RsmG family.

It localises to the cytoplasm. Specifically methylates the N7 position of guanine in position 518 of 16S rRNA. In Mycobacterium sp. (strain KMS), this protein is Ribosomal RNA small subunit methyltransferase G.